The sequence spans 124 residues: MEQLVYIALLGALGCLCRYFLSGFVYQVFGTSFPYGTLAVNLIGAFLIGLIMEFSVRSAAIPPTLRFAITIGFLGGLTTFSTFSFETFRLLEDGALLIAIVNVLVSVVACLTCTWIGIMVARAL.

The next 4 helical transmembrane spans lie at 5-25, 32-52, 67-87, and 96-116; these read VYIALLGALGCLCRYFLSGFV, SFPYGTLAVNLIGAFLIGLIM, FAITIGFLGGLTTFSTFSFET, and LLIAIVNVLVSVVACLTCTWI. Na(+)-binding residues include glycine 75 and threonine 78.

The protein belongs to the fluoride channel Fluc/FEX (TC 1.A.43) family.

It localises to the cell inner membrane. It carries out the reaction fluoride(in) = fluoride(out). With respect to regulation, na(+) is not transported, but it plays an essential structural role and its presence is essential for fluoride channel function. In terms of biological role, fluoride-specific ion channel. Important for reducing fluoride concentration in the cell, thus reducing its toxicity. The chain is Fluoride-specific ion channel FluC from Citrifermentans bemidjiense (strain ATCC BAA-1014 / DSM 16622 / JCM 12645 / Bem) (Geobacter bemidjiensis).